The primary structure comprises 89 residues: MMNDHNERKPLRTIKGRVISNKMQKTVTVLVERQIKHALYGKYIKRSTKLHAHDADDLCNEGDVVLMTEVAPISKTKNWRVVEIVARSD.

This sequence belongs to the universal ribosomal protein uS17 family. As to quaternary structure, part of the 30S ribosomal subunit.

In terms of biological role, one of the primary rRNA binding proteins, it binds specifically to the 5'-end of 16S ribosomal RNA. This Xylella fastidiosa (strain 9a5c) protein is Small ribosomal subunit protein uS17.